We begin with the raw amino-acid sequence, 382 residues long: Lipid-A-disaccharide synthase (382 aa).

Belongs to the LpxB family.

The catalysed reaction is 2-N,3-O-bis[(3R)-3-hydroxytetradecanoyl]-alpha-D-glucosaminyl 1-phosphate + UDP-2-N,3-O-bis[(3R)-3-hydroxytetradecanoyl]-alpha-D-glucosamine = lipid A disaccharide (E. coli) + UDP + H(+). It catalyses the reaction a lipid X + a UDP-2-N,3-O-bis[(3R)-3-hydroxyacyl]-alpha-D-glucosamine = a lipid A disaccharide + UDP + H(+). The protein operates within glycolipid biosynthesis; lipid IV(A) biosynthesis; lipid IV(A) from (3R)-3-hydroxytetradecanoyl-[acyl-carrier-protein] and UDP-N-acetyl-alpha-D-glucosamine: step 5/6. Functionally, condensation of UDP-2,3-diacylglucosamine and 2,3-diacylglucosamine-1-phosphate to form lipid A disaccharide, a precursor of lipid A, a phosphorylated glycolipid that anchors the lipopolysaccharide to the outer membrane of the cell. The protein is Lipid-A-disaccharide synthase of Escherichia coli (strain 55989 / EAEC).